The following is a 715-amino-acid chain: Solute carrier organic anion transporter family member 1C1 (715 aa).

Over 1 to 43 (MDTSSKENAHLFHKNSAQPAGGPSFTVGYPSTEEARPCCGKLK) the chain is Cytoplasmic. Residues 44 to 63 (VFLGALSFVYFAKALAEGYL) traverse the membrane as a helical segment. The Extracellular segment spans residues 64–82 (KSTVTQIERRFEIPSSLVG). The chain crosses the membrane as a helical span at residues 83-103 (IIDGSFEIGNLLVITFVSYFG). The Cytoplasmic segment spans residues 104-109 (AKLHRP). Residues 110-134 (KIIGAGCLVMGFGTMLIAVPQFFME) traverse the membrane as a helical segment. Residues 135-187 (KYSYEKYERYSPSSNVTPSISPCYLESSSPSPSSILGKSQNKISHECVGDSSS) are Extracellular-facing. A helical transmembrane segment spans residues 188 to 216 (SMWVYVFLGNLLRGLGETPIQPLGIAYLD). Topologically, residues 217–235 (DFASEDNAAFYIGCVQTVA) are cytoplasmic. The helical transmembrane segment at 236–256 (IIGPIFGFLLGSLCAKLYVDI) threads the bilayer. At 257–274 (GFVNLDHITITPKDPQWV) the chain is on the extracellular side. The chain crosses the membrane as a helical span at residues 275 to 299 (GAWWLGYLIAGFLSLLAAVPFWCLP). The Cytoplasmic segment spans residues 300–351 (KTLPRSQSRENSGSTSEKSKFIDDPIHYQMAPGDDKMKIMEMAKDFLPSLKT). A helical membrane pass occupies residues 352-373 (LFRNPVYILYLCASTVQFNSLF). At 374 to 393 (GMVTYKPKYIEQQYGQSSSK) the chain is on the extracellular side. Residues 394-417 (ANFVIGLINIPAVALGIFSGGIVM) form a helical membrane-spanning segment. The Cytoplasmic portion of the chain corresponds to 418 to 421 (KKFR). A helical membrane pass occupies residues 422-445 (LGICEATKLYLGSSVFGYLLFLSL). The Extracellular portion of the chain corresponds to 446–557 (FALGCENSSV…NGCSQMFLYF (112 aa)). A glycan (N-linked (GlcNAc...) asparagine) is linked at Asn-452. The region spanning 473-528 (RALFSDCNSRCKCSDSKWEPMCGDNGITYVSACLAGCQSSSRSGKNIIFSNCTCVG) is the Kazal-like domain. Disulfide bonds link Cys-479–Cys-509, Cys-485–Cys-505, and Cys-494–Cys-526. Residues Asn-523 and Asn-536 are each glycosylated (N-linked (GlcNAc...) asparagine). Residues 558–580 (LVISVITSYTLSLGGIPGYILLL) form a helical membrane-spanning segment. Topologically, residues 581-589 (RCIQPQLKS) are cytoplasmic. Residues 590–615 (FALGIYTLAVRVLAGIPAPVYFGVLI) form a helical membrane-spanning segment. The Extracellular portion of the chain corresponds to 616-649 (DTSCLKWGFKKCGSRGSCRLYDSHAFRHIYLGLT). A helical membrane pass occupies residues 650 to 667 (TLLGTVSVFLSMAVLFVL). At 668 to 715 (KKKYVSKHSSLITTREKIGMSSSIKKETCAARDRGLQPKYWPGKETRL) the chain is on the cytoplasmic side.

This sequence belongs to the organo anion transporter (TC 2.A.60) family. As to expression, widely expressed throughout the brain except in the cerebellum. Not detected in kidney, heart, lung, skeletal muscle, spleen, liver, nor testis. Highly expressed in cerebral microvessels throughout the brain and in the choroid plexus (at mRNA and protein level).

The protein resides in the cell membrane. The enzyme catalyses 3,3',5'-triiodo-L-thyronine(out) = 3,3',5'-triiodo-L-thyronine(in). It catalyses the reaction L-thyroxine(out) = L-thyroxine(in). The catalysed reaction is L-thyroxine sulfate(out) = L-thyroxine sulfate(in). It carries out the reaction 17beta-estradiol 17-O-(beta-D-glucuronate)(out) = 17beta-estradiol 17-O-(beta-D-glucuronate)(in). The enzyme catalyses 3,3',5-triiodo-L-thyronine(out) = 3,3',5-triiodo-L-thyronine(in). Functionally, mediates the Na(+)-independent high affinity transport of thyroid hormones at the plasma membrane of brain capillary endothelial cells. The transport activity of substrates L-thyroxine (T4) and 3,3',5'-triiodo-L-thyronine (reverse T3, rT3) is much greater than that of 3,3',5-triiodo-L-thyronine (T3). The prehormone, T4, is the major form in the circulating blood and is converted to the active form, T3, by the iodothyronine-deiodinase in peripheral organs. T3 plays an essential role in brain development via binding to specific nuclear receptors (thyroid hormone receptor). Also transports organic anions such as the conjugated steroid 17-beta-glucuronosyl estradiol (17beta-estradiol 17-O-(beta-D-glucuronate)). Transports T4 and estrone-3-sulfate in a pH-insensitive manner. May serve as a drug efflux system at the blood brain barrier. The chain is Solute carrier organic anion transporter family member 1C1 (Slco1c1) from Mus musculus (Mouse).